The primary structure comprises 1318 residues: Major tegument protein (1318 aa).

This sequence belongs to the herpesviridae MTP family. In terms of assembly, interacts with host DAXX; this interaction disrupts the chromatin remodeling complex ATRX:DAXX and thus allows viral transcription. Interacts with host SMC6; this interaction targets SMC5-SMC6 complex for proteasomal degradation.

The protein resides in the virion tegument. It is found in the host nucleus. Tegument protein that plays a role in the inhibition of host intrinsic defenses to promote viral early gene activation. Interacts with host DAXX and thereby disrupts the complex between DAXX and ATRX. Suppresses the DAXX-ATRX dependent deposition of histone H3.3 on viral chromatin allowing viral transcription. Targets also host SMC5/6 for proteasomal degradation in a CUL7 and calpain-dependent manner to support nuclear membrane-less replication compartment formation and lytic virus replication. The polypeptide is Major tegument protein (Homo sapiens (Human)).